We begin with the raw amino-acid sequence, 498 residues long: Glycerol kinase (498 aa).

Residue T12 coordinates ADP. Residues T12, T13, and S14 each contribute to the ATP site. T12 contacts sn-glycerol 3-phosphate. R16 contributes to the ADP binding site. Positions 82, 83, 134, and 241 each coordinate sn-glycerol 3-phosphate. Glycerol contacts are provided by R82, E83, Y134, D241, and Q242. ADP is bound by residues T263 and G310. The ATP site is built by T263, G310, Q314, and G411. Residues G411 and N415 each coordinate ADP.

Belongs to the FGGY kinase family.

It catalyses the reaction glycerol + ATP = sn-glycerol 3-phosphate + ADP + H(+). It functions in the pathway polyol metabolism; glycerol degradation via glycerol kinase pathway; sn-glycerol 3-phosphate from glycerol: step 1/1. Its activity is regulated as follows. Inhibited by fructose 1,6-bisphosphate (FBP). Its function is as follows. Key enzyme in the regulation of glycerol uptake and metabolism. Catalyzes the phosphorylation of glycerol to yield sn-glycerol 3-phosphate. This Janthinobacterium sp. (strain Marseille) (Minibacterium massiliensis) protein is Glycerol kinase.